The following is an 81-amino-acid chain: Cytoplasmic envelopment protein 3 (81 aa).

A lipid anchor (N-myristoyl glycine; by host) is attached at Gly-2. The Di-leucine-like internalization motif signature appears at 22–23 (LV). An asp/Glu-rich (acidic) region spans residues 41 to 47 (DFDENVT). Residues 47–81 (TEDADKSTQRRPRVIDVTPKRKPSGKSSHSKCAKC) form a disordered region. Residues 66 to 81 (KRKPSGKSSHSKCAKC) are compositionally biased toward basic residues.

Belongs to the herpesviridae cytoplasmic envelopment protein 3 family. As to quaternary structure, interacts with cytoplasmic envelopment protein 2; this interaction is essential for the proper localization of each protein to the assembly complex and thus for the production of infectious virus. In terms of processing, myristoylation and palmitoylation (probably on one or more of the nearby cysteines at the N-terminus) enable membrane-binding and Golgi apparatus-specific targeting and are essential for efficient packaging. Post-translationally, phosphorylated. Phosphorylation does not seem to be required for recycling to the host Golgi apparatus. Packaging is selective for underphosphorylated forms.

The protein localises to the virion tegument. The protein resides in the virion membrane. It localises to the host cell membrane. It is found in the host Golgi apparatus membrane. Plays an important role in the cytoplasmic envelopment of tegument proteins and capsids during the assembly and egress processes. Also participates in viral entry at the fusion step probably by regulating the core fusion machinery. This Homo sapiens (Human) protein is Cytoplasmic envelopment protein 3.